The following is a 106-amino-acid chain: Putative double-stranded DNA mimic protein PM0536 (106 aa).

Belongs to the putative dsDNA mimic protein family.

May act as a double-stranded DNA (dsDNA) mimic. Probably regulates the activity of a dsDNA-binding protein. This is Putative double-stranded DNA mimic protein PM0536 from Pasteurella multocida (strain Pm70).